We begin with the raw amino-acid sequence, 371 residues long: Putative HAD-like hydrolase Noc_2718 (371 aa).

The HAD-like hydrolase stretch occupies residues 1-288; it reads MKQKILLCSD…TGREESAEEE (288 aa). Residues 291 to 371 form the YcgL domain; that stretch reads QSCAIYRSCK…QLSSREYRRS (81 aa).

In the N-terminal section; belongs to the HAD-like hydrolase superfamily.

The chain is Putative HAD-like hydrolase Noc_2718 from Nitrosococcus oceani (strain ATCC 19707 / BCRC 17464 / JCM 30415 / NCIMB 11848 / C-107).